Consider the following 235-residue polypeptide: Transmembrane emp24 domain-containing protein 9 (235 aa).

The N-terminal stretch at 1–37 is a signal peptide; that stretch reads MAVELGVLLVRPRPGTGLGRVMRTLLLVLWLATRGSA. Over 38–202 the chain is Lumenal; that stretch reads LYFHIGETEK…RQTSESTNQR (165 aa). Positions 47-145 constitute a GOLD domain; it reads KKCFIEEIPD…MLRVHLDIQV (99 aa). A required for interaction with STX17 region spans residues 121–160; that stretch reads CLHSNSTKFSLFAGGMLRVHLDIQVGEHANDYAEIAAKDK. N-linked (GlcNAc...) asparagine glycosylation occurs at asparagine 125. Residues 154-184 are a coiled coil; that stretch reads EIAAKDKLSELQLRVRQLVEQVEQIQKEQNY. N6-acetyllysine is present on lysine 160. A helical transmembrane segment spans residues 203-222; that stretch reads VLWWSILQTLILVAIGVWQM. Residues 223 to 235 are Cytoplasmic-facing; the sequence is RHLKSFFEAKKLV. The short motif at 228–229 is the COPII vesicle coat-binding element; it reads FF. Residues 228-235 carry the COPI vesicle coat-binding motif; it reads FFEAKKLV.

It belongs to the EMP24/GP25L family. As to quaternary structure, monomer and homodimer in endoplasmic reticulum. Predominantly monomeric and to lesser extent homodimeric in endoplasmic reticulum-Golgi intermediate compartment and cis-Golgi network. Probably oligomerizes with other members of the EMP24/GP25L family such as TMED2, TMED7 and TMED10. Interacts with TMED5. Interacts (via C-terminus) with COPG1; the interaction involves dimeric TMED9. Interacts with PTPN2 and SPAST. Interacts with STX17; the interaction is direct. Post-translationally, N-linked glycosylated containing high mannose.

It localises to the endoplasmic reticulum membrane. Its subcellular location is the golgi apparatus. The protein resides in the cis-Golgi network membrane. It is found in the endoplasmic reticulum-Golgi intermediate compartment membrane. The protein localises to the trans-Golgi network membrane. Its function is as follows. Appears to be involved in vesicular protein trafficking, mainly in the early secretory pathway. In COPI vesicle-mediated retrograde transport involved in the coatomer recruitment to membranes of the early secretory pathway. Increases coatomer-dependent activity of ARFGAP2. Thought to play a crucial role in the specific retention of p24 complexes in cis-Golgi membranes; specifically contributes to the coupled localization of TMED2 and TMED10 in the cis-Golgi network. May be involved in organization of intracellular membranes, such as of the ER-Golgi intermediate compartment and the Golgi apparatus. Involved in ER localization of PTPN2 isoform PTPB. This Homo sapiens (Human) protein is Transmembrane emp24 domain-containing protein 9 (TMED9).